The sequence spans 156 residues: Calmodulin (156 aa).

Position 2 is an N-acetylserine (S2). EF-hand domains are found at residues 15-50, 51-86, 88-123, and 124-156; these read EQIA…LGQN, PTEA…KMKD, DSEE…LGEK, and LTDE…MTSK. D28, D30, D32, T34, E39, D64, D66, N68, T70, E75, D101, D103, N105, and E112 together coordinate Ca(2+). K123 bears the N6,N6,N6-trimethyllysine mark. Ca(2+) is bound by residues D137, D139, D141, Q143, and E148.

It belongs to the calmodulin family.

Calmodulin mediates the control of a large number of enzymes, ion channels and other proteins by Ca(2+). Among the enzymes to be stimulated by the calmodulin-Ca(2+) complex are a number of protein kinases and phosphatases. In Strongylocentrotus intermedius (Sea urchin), this protein is Calmodulin.